An 83-amino-acid polypeptide reads, in one-letter code: Mu-theraphotoxin-Hhn2e (83 aa).

An N-terminal signal peptide occupies residues 1–21; sequence MKASMFLALAGLVLLFVVGYA. The propeptide occupies 22–48; the sequence is SESEEKEFPRELLSKIFAVDDFKGEER. 3 disulfide bridges follow: cysteine 50-cysteine 65, cysteine 57-cysteine 70, and cysteine 64-cysteine 77. Leucine 81 is modified (leucine amide).

The protein belongs to the neurotoxin 10 (Hwtx-1) family. 15 (Hntx-3) subfamily. As to quaternary structure, monomer. As to expression, expressed by the venom gland.

The protein resides in the secreted. Its function is as follows. Lethal neurotoxin. Selectively blocks tetrodotoxin-sensitive voltage-gated sodium channels (Nav). Does not affect tetrodotoxin-resistant voltage-gated sodium channels or calcium channels. This is Mu-theraphotoxin-Hhn2e from Cyriopagopus hainanus (Chinese bird spider).